The chain runs to 525 residues: Nucleolar and spindle-associated protein 1-A (525 aa).

4 disordered regions span residues Glu-46–Ala-205, Glu-248–Ala-292, Thr-373–Ala-397, and Ser-451–Gln-525. Residues Ser-58–Ser-69 show a composition bias toward polar residues. Residues Thr-82–Leu-92 show a composition bias toward basic residues. Over residues Ser-106–Leu-127 the composition is skewed to polar residues. The span at Thr-160–Ser-169 shows a compositional bias: basic and acidic residues. Residues Pro-270 to Arg-285 show a composition bias toward polar residues. Over residues Cys-476–Leu-494 the composition is skewed to polar residues. Basic and acidic residues predominate over residues Gln-495–Gln-514.

Belongs to the NUSAP family. In terms of assembly, interacts with DNA. Interacts with microtubules, ipo7, kpna2 and kpnb1. Microtubule stabilization is inhibited by ipo7 and kpna2, while microtubule bundling is inhibited by kpnb1. Active GTP-bound ran causes dissociation of ipo7 and kpnb1.

Its subcellular location is the cytoplasm. It is found in the nucleus. It localises to the cytoskeleton. The protein resides in the spindle. Microtubule-associated protein with the capacity to bundle and stabilize microtubules. May associate with chromosomes and promote the organization of meiotic or mitotic spindle microtubules around them. This chain is Nucleolar and spindle-associated protein 1-A (nusap1-a), found in Xenopus laevis (African clawed frog).